The sequence spans 54 residues: Large ribosomal subunit protein bL33 (54 aa).

The protein belongs to the bacterial ribosomal protein bL33 family.

The chain is Large ribosomal subunit protein bL33 from Buchnera aphidicola subsp. Cinara cedri (strain Cc).